A 930-amino-acid polypeptide reads, in one-letter code: G patch domain-containing protein 1 (930 aa).

Residues 1–12 (MAALDSDSDEDL) are compositionally biased toward acidic residues. 2 disordered regions span residues 1–41 (MAAL…TVRD) and 170–209 (GVGPRVKRKARRQKPDPGVKIYGCALPPGGSEESEDEDDD). Position 2 is an N-acetylalanine (Ala-2). A phosphoserine mark is found at Ser-6 and Ser-8. The G-patch domain occupies 152–198 (KLSVGFELLRKMGWKEGQGVGPRVKRKARRQKPDPGVKIYGCALPPG). Lys-313 is covalently cross-linked (Glycyl lysine isopeptide (Lys-Gly) (interchain with G-Cter in SUMO2)). Ser-358 carries the phosphoserine modification. Disordered stretches follow at residues 400–420 (GKAGQDVGTHSRHQLNASKRG), 465–486 (SLAQSASSSRAQASTPDLGHSS), 566–596 (SSRFTHAKEEEDSDQVEVPRDQENDVSDKQS), and 654–930 (PEPA…LRRQ). Residues 465–478 (SLAQSASSSRAQAS) are compositionally biased toward low complexity. Composition is skewed to basic and acidic residues over residues 582 to 593 (EVPRDQENDVSD) and 674 to 695 (GSDKSRKPSRWDTSKQEKKEDS). Ser-715 is subject to Phosphoserine. Residues 719–737 (SKEEQAPEPRPDTTVDKAV) show a composition bias toward basic and acidic residues. Acidic residues predominate over residues 768–777 (SEEEQDDSED). The segment covering 851–886 (KPKKSKERHKSKKEHRRKREKKKKHKKHKHKSKQKN) has biased composition (basic residues). The span at 894–903 (SSESTDSSDS) shows a compositional bias: low complexity. Positions 921–930 (RLKCLPLRRQ) are enriched in basic residues.

Belongs to the GPATCH1 family.

The protein is G patch domain-containing protein 1 (Gpatch1) of Mus musculus (Mouse).